We begin with the raw amino-acid sequence, 517 residues long: B3 domain-containing protein REM1 (517 aa).

The segment at residues 7 to 92 (FSLFQQKFRT…VFHVAVVSPS (86 aa)) is a DNA-binding region (TF-B3 1). Residues 115 to 140 (DDVDDDDYGQDDEDDDDDDDEGEDNI) show a composition bias toward acidic residues. Positions 115–158 (DDVDDDDYGQDDEDDDDDDDEGEDNIENISEKTDKRQEADSSSD) are disordered. Basic and acidic residues predominate over residues 143 to 157 (ISEKTDKRQEADSSS). DNA-binding regions (TF-B3) lie at residues 162–259 (FITA…CPQE) and 285–385 (FLIV…FCSK). Residues 393–415 (GKGNQRTRKKRACETAPQPRNVK) form a disordered region.

In terms of tissue distribution, expressed in the shoot apical meristem (SAM), in the inflorescence apex and flowers.

It localises to the nucleus. Its function is as follows. May play a role in flower development. This chain is B3 domain-containing protein REM1 (REM1), found in Arabidopsis thaliana (Mouse-ear cress).